Here is a 118-residue protein sequence, read N- to C-terminus: Large ribosomal subunit protein bL20c (118 aa).

This sequence belongs to the bacterial ribosomal protein bL20 family.

The protein resides in the plastid. It is found in the chloroplast. Its function is as follows. Binds directly to 23S ribosomal RNA and is necessary for the in vitro assembly process of the 50S ribosomal subunit. It is not involved in the protein synthesizing functions of that subunit. The polypeptide is Large ribosomal subunit protein bL20c (Gracilaria tenuistipitata var. liui (Red alga)).